The following is a 123-amino-acid chain: uncharacterized protein (123 aa).

This is an uncharacterized protein from Autographa californica nuclear polyhedrosis virus (AcMNPV).